The primary structure comprises 622 residues: MSTDNKQSLPAITLAAIGVVYGDIGTSPLYTLRECLSGQFGFGVERDAVFGFLSLIFWLLIFVVSIKYLTFVMRADNAGEGGILTLMSLAGRNTSARTTSMLVIMGLIGGSFFYGEVVITPAISVMSAIEGLEIVAPQLDTWIVPLSIIVLTLLFMIQKHGTAMVGQLFAPIMLTWFLILAGLGLRSIIANPEVLHALNPMWAVHFFLEYKTVSFIALGAVVLSITGVEALYADMGHFGKFPIRLAWFTVVLPSLTLNYFGQGALLLKNPEAIKNPFFLLAPDWALIPLLIIAALATVIASQAVISGVFSLTRQAVRLGYLSPMRIIHTSEMESGQIYIPFVNWMLYVAVVIVIVSFEHSSNLAAAYGIAVTGTMVLTSILSTTVARQNWHWNKYFVALILIAFLCVDIPLFTANLDKLLSGGWLPLSLGTVMFIVMTTWKSERFRLLRRMHEHGNSLEAMIASLEKSPPVRVPGTAVYMSRAINVIPFALMHNLKHNKVLHERVILLTLRTEDAPYVHNVRRVQIEQLSPTFWRVVASYGWRETPNVEEVFHRCGLEGLSCRMMETSFFMSHESLILGKRPWYLRLRGKLYLLLQRNALRAPDQFEIPPNRVIELGTQVEI.

Helical transmembrane passes span 9-29 (LPAI…TSPL), 49-69 (VFGF…IKYL), 103-123 (VIMG…TPAI), 137-157 (PQLD…LFMI), 165-185 (VGQL…GLGL), 213-233 (VSFI…ALYA), 247-267 (WFTV…ALLL), 276-296 (PFFL…AALA), 337-357 (IYIP…IVSF), 363-383 (LAAA…ILST), 396-416 (FVAL…TANL), and 419-439 (LLSG…VMTT).

This sequence belongs to the HAK/KUP transporter (TC 2.A.72) family.

The protein localises to the cell inner membrane. It carries out the reaction K(+)(in) + H(+)(in) = K(+)(out) + H(+)(out). Responsible for the low-affinity transport of potassium into the cell. Likely operates as a K(+):H(+) symporter. This Escherichia coli O6:K15:H31 (strain 536 / UPEC) protein is Low affinity potassium transport system protein Kup.